Here is a 282-residue protein sequence, read N- to C-terminus: 4-hydroxy-3-methylbut-2-enyl diphosphate reductase (282 aa).

Cysteine 12 is a [4Fe-4S] cluster binding site. Residues histidine 40 and histidine 72 each coordinate (2E)-4-hydroxy-3-methylbut-2-enyl diphosphate. Residues histidine 40 and histidine 72 each coordinate dimethylallyl diphosphate. Isopentenyl diphosphate contacts are provided by histidine 40 and histidine 72. Cysteine 94 serves as a coordination point for [4Fe-4S] cluster. Histidine 122 is a (2E)-4-hydroxy-3-methylbut-2-enyl diphosphate binding site. Histidine 122 contacts dimethylallyl diphosphate. Histidine 122 contributes to the isopentenyl diphosphate binding site. Residue glutamate 124 is the Proton donor of the active site. A (2E)-4-hydroxy-3-methylbut-2-enyl diphosphate-binding site is contributed by threonine 160. Cysteine 188 serves as a coordination point for [4Fe-4S] cluster. Serine 216, asparagine 218, and serine 260 together coordinate (2E)-4-hydroxy-3-methylbut-2-enyl diphosphate. Dimethylallyl diphosphate contacts are provided by serine 216, asparagine 218, and serine 260. Residues serine 216, asparagine 218, and serine 260 each coordinate isopentenyl diphosphate.

Belongs to the IspH family. [4Fe-4S] cluster is required as a cofactor.

It carries out the reaction isopentenyl diphosphate + 2 oxidized [2Fe-2S]-[ferredoxin] + H2O = (2E)-4-hydroxy-3-methylbut-2-enyl diphosphate + 2 reduced [2Fe-2S]-[ferredoxin] + 2 H(+). The enzyme catalyses dimethylallyl diphosphate + 2 oxidized [2Fe-2S]-[ferredoxin] + H2O = (2E)-4-hydroxy-3-methylbut-2-enyl diphosphate + 2 reduced [2Fe-2S]-[ferredoxin] + 2 H(+). Its pathway is isoprenoid biosynthesis; dimethylallyl diphosphate biosynthesis; dimethylallyl diphosphate from (2E)-4-hydroxy-3-methylbutenyl diphosphate: step 1/1. It participates in isoprenoid biosynthesis; isopentenyl diphosphate biosynthesis via DXP pathway; isopentenyl diphosphate from 1-deoxy-D-xylulose 5-phosphate: step 6/6. In terms of biological role, catalyzes the conversion of 1-hydroxy-2-methyl-2-(E)-butenyl 4-diphosphate (HMBPP) into a mixture of isopentenyl diphosphate (IPP) and dimethylallyl diphosphate (DMAPP). Acts in the terminal step of the DOXP/MEP pathway for isoprenoid precursor biosynthesis. The protein is 4-hydroxy-3-methylbut-2-enyl diphosphate reductase of Geotalea daltonii (strain DSM 22248 / JCM 15807 / FRC-32) (Geobacter daltonii).